A 314-amino-acid chain; its full sequence is Malate dehydrogenase (314 aa).

Residues 11–16 (GSGNIG) and Asp35 contribute to the NAD(+) site. 2 residues coordinate substrate: Arg84 and Arg90. NAD(+) contacts are provided by residues Asn97 and 120 to 122 (ITN). Substrate contacts are provided by Asn122 and Arg153. His177 serves as the catalytic Proton acceptor.

The protein belongs to the LDH/MDH superfamily. MDH type 3 family.

It carries out the reaction (S)-malate + NAD(+) = oxaloacetate + NADH + H(+). Catalyzes the reversible oxidation of malate to oxaloacetate. In Rickettsia africae (strain ESF-5), this protein is Malate dehydrogenase.